Consider the following 216-residue polypeptide: LHFPL tetraspan subfamily member 3 protein (216 aa).

Helical transmembrane passes span 22 to 42 (IGVL…VCFV), 96 to 116 (FFIG…ALFF), 126 to 146 (ICGW…MIYP), and 177 to 197 (ILAI…FVLG).

Belongs to the LHFP family.

It is found in the membrane. This Danio rerio (Zebrafish) protein is LHFPL tetraspan subfamily member 3 protein.